A 778-amino-acid chain; its full sequence is MKTRYSVLSVAMTAAFYTQYAQADLREQCLLGVPHFQGEEVTGDQTMMPIEIEADNAVINQPKDATYTGDVAIKQGNRSLFADEVRVEQNGEQERRAFLKGSYRYQDNLIQAHGRDAAMDLGSETAELQNTEFQLVGRQGRGTAESGSFNHNKRILKNATFTACLPNDNAWSIEGNEMIQHIDEEYAEIWHARFKVLGMPVFYSPYLQFPIGDRRRSGLLIPNFHRSSKDGFAYSQPFYWNIAPNMDATITPTYYSRRGWQISPEYRYLTKLGEGIVAGEYIGKDRLDEYRPDDNDRKRYLMHWRHNMSFLTGWRLYVDYTKVSDKRYFSDFDSEYGSSTDGYATQQFKLGYYQPNYNLSISGKKFQTFDELDVGPYRVLPQIDFNYYNDELVKGGDFKLFAQTARFENDSKLMPKAWRFHVEPTLNFPLANRYGSLNFETKLYATHYLQEKGSSKQADDMDKNVTRIIPQVKVDLQTVLEADKQLFKGFNQTFEPRVQYVYRPYKDQSNIGSGLNQSVSFGYDSALLQSDYFSLFNDRRYSGLDRISSANLITAGGTNRFFNEKTGVEVFNFSIGQTYYLSPSKIDDLSQNSTTKRSSSWALESNWKFHRKWNWHGAYQYDTRLNQTSLANTSLQYKPSQDKLVQLSYRFASKDYINQNLRSNTYGQDIKQVGAVVGWELTDRVAFMASHYHDIALKKPVESQLSVNYNTCCWSANVYVARKLTATPIGSPDTINDLYYDNKFGVNFELRFGTNYSSGVRKMLKKGMIPYTEQYGIN.

The N-terminal stretch at 1–23 (MKTRYSVLSVAMTAAFYTQYAQA) is a signal peptide.

The protein belongs to the LptD family. In terms of assembly, component of the lipopolysaccharide transport and assembly complex. Interacts with LptE and LptA.

Its subcellular location is the cell outer membrane. In terms of biological role, together with LptE, is involved in the assembly of lipopolysaccharide (LPS) at the surface of the outer membrane. In Actinobacillus pleuropneumoniae serotype 5b (strain L20), this protein is LPS-assembly protein LptD.